A 317-amino-acid polypeptide reads, in one-letter code: Melanocyte-stimulating hormone receptor (317 aa).

The disordered stretch occupies residues 1 to 26; the sequence is MPVQGSPRSLLGAVNSTPTATPHLRP. The Extracellular segment spans residues 1–37; it reads MPVQGSPRSLLGAVNSTPTATPHLRPAANQTGPQCLE. Residue N29 is glycosylated (N-linked (GlcNAc...) asparagine). Residues 38-63 traverse the membrane as a helical segment; it reads VSIPDGLFLCLGLVSLVENTLVVAAI. Topologically, residues 64 to 72 are cytoplasmic; sequence AKNRNLHSP. Residues 73 to 93 traverse the membrane as a helical segment; that stretch reads MYCFVCCLALSDLLVSVSSVL. Residues 94–118 lie on the Extracellular side of the membrane; the sequence is ETAVLLLLGAGALAAQATVVQLLGN. Residues 119–140 traverse the membrane as a helical segment; the sequence is VIDVLLCSSMVSSLFFLGAIAM. The Cytoplasmic segment spans residues 141–163; sequence DRYISIFYALRYHSIVTLARARR. The chain crosses the membrane as a helical span at residues 164 to 183; the sequence is AIAAIWAASMLSSTLFIAYC. At 184–191 the chain is on the extracellular side; sequence DHTAALLC. Residues 192-211 form a helical membrane-spanning segment; that stretch reads LVVFFLAMLVLMAVLYVHML. The Cytoplasmic portion of the chain corresponds to 212-240; it reads TQACQHAQGIARLHKRQRPVQQGWGLKGA. The helical transmembrane segment at 241 to 266 threads the bilayer; sequence ATLAILLGVFFLCWGPFFLHLTLIAV. Topologically, residues 267 to 279 are extracellular; sequence CPQHPTCSCIFKN. Residues 280–300 traverse the membrane as a helical segment; that stretch reads FRLFLALIVCNAIVDPLIYAF. Residues 301–317 lie on the Cytoplasmic side of the membrane; that stretch reads RSQELCKTLKELLLFSW.

The protein belongs to the G-protein coupled receptor 1 family. In terms of assembly, interacts with MGRN1, but does not undergo MGRN1-mediated ubiquitination; this interaction competes with GNAS-binding and thus inhibits agonist-induced cAMP production. Interacts with OPN3; the interaction results in a decrease in MC1R-mediated cAMP signaling and ultimately a decrease in melanin production in melanocytes.

The protein localises to the cell membrane. Functionally, receptor for MSH (alpha, beta and gamma) and ACTH. The activity of this receptor is mediated by G proteins which activate adenylate cyclase. Mediates melanogenesis, the production of eumelanin (black/brown) and phaeomelanin (red/yellow), via regulation of cAMP signaling in melanocytes. This Hapalemur griseus (Gray gentle lemur) protein is Melanocyte-stimulating hormone receptor (MC1R).